Consider the following 81-residue polypeptide: Putative membrane protein insertion efficiency factor (81 aa).

It belongs to the UPF0161 family.

It is found in the cell inner membrane. Could be involved in insertion of integral membrane proteins into the membrane. This chain is Putative membrane protein insertion efficiency factor, found in Pseudomonas syringae pv. syringae (strain B728a).